The chain runs to 735 residues: Muskelin (735 aa).

At Ala-2 the chain carries N-acetylalanine. Residues 172 to 204 form the LisH domain; it reads REQEAIRLCLKHFRQHNYTEAFESLQKKTKIAL. Positions 206–258 constitute a CTLH domain; that stretch reads HPMLTDIHDKLVLKGDFDACEELIEKAVNDGLFNQYISQQEYKPRWSQIIPKS. 6 Kelch repeats span residues 284-330, 339-391, 408-458, 469-515, 526-578, and 597-651; these read TVYL…SCHK, QIYT…FDHQ, ILTC…SRIG, CLYV…TGFT, EIHV…SLQE, and VHYL…AQMD.

In terms of assembly, homodimer; may form higher oligomers. Identified in the CTLH complex that contains GID4, RANBP9 and/or RANBP10, MKLN1, MAEA, RMND5A (or alternatively its paralog RMND5B), GID8, ARMC8, WDR26 and YPEL5. Within this complex, MAEA, RMND5A (or alternatively its paralog RMND5B), GID8, WDR26, and RANBP9 and/or RANBP10 form the catalytic core, while GID4, MKLN1, ARMC8 and YPEL5 have ancillary roles. Interacts with RANBP9. Part of a complex consisting of RANBP9, MKLN1 and GID8. Interacts with GABRA1. Interacts with the C-terminal tail of PTGER3.

It localises to the cytoplasm. It is found in the cytosol. The protein localises to the nucleus. The protein resides in the nucleoplasm. Its subcellular location is the cell projection. It localises to the ruffle. It is found in the cell cortex. The protein localises to the synapse. The protein resides in the postsynapse. Functionally, component of the CTLH E3 ubiquitin-protein ligase complex that selectively accepts ubiquitin from UBE2H and mediates ubiquitination and subsequent proteasomal degradation of the transcription factor HBP1. Required for internalization of the GABA receptor GABRA1 from the cell membrane via endosomes and subsequent GABRA1 degradation. Acts as a mediator of cell spreading and cytoskeletal responses to the extracellular matrix component THBS1. This is Muskelin (MKLN1) from Pongo abelii (Sumatran orangutan).